The chain runs to 544 residues: MSKFVFVTGGVVSSVGKGITVASLGNILKSRGLSVSVQKLDPYLNVDPGTMSPYQHGEVFVTQDGAETDLDLGSYERFIDIELTADSTVTSGQVYSEVINKERRGDYLGGTIQVVPHVTQEIKARIQRLADRSKADVVIVEVGGTVGDIEGQPFLEAIRQMRNDMGRDNVIYIHVTLLPYIQSTQELKTKPTQHSVNELRRIGIQPDIIVCRADYPISEGIRDKLSLFCDVERKAVIFMPTVSTIYEVPLKLESEGVGDLLVSRLHLNASPSDLSIWRGLVEKIKEPTPAVRIALVGKYVELKDAYYSVRESLCHAAIHNGRDIQIDWVYAEDIEKNGPEEYLKHVQGIIIPGGFGIRGIEGMITAVKYARENGIPYLGLCLGMQVMVIEFARHVLQSDKAHSTEFEPDSPYPVIDLLPEQRGVDSKGGTMRLGNYPCVIQPGTMAGQAYGNKLINERHRHRFEFNNDYRDTLSKAGMVFSGLSPDGKLVEICEVSGHPFMVGSQFHPEFLSRPNRPHPLFREFINAAKKVIRDGEQPSLPLSP.

The amidoligase domain stretch occupies residues 1-267 (MSKFVFVTGG…GDLLVSRLHL (267 aa)). S13 contacts CTP. UTP is bound at residue S13. 14–19 (SVGKGI) contributes to the ATP binding site. Y54 contacts L-glutamine. D71 is a binding site for ATP. Mg(2+)-binding residues include D71 and E141. CTP contacts are provided by residues 148 to 150 (DIE), 188 to 193 (KTKPTQ), and K224. Residues 188–193 (KTKPTQ) and K224 each bind UTP. The region spanning 299–534 (YVELKDAYYS…INAAKKVIRD (236 aa)) is the Glutamine amidotransferase type-1 domain. G354 provides a ligand contact to L-glutamine. C381 serves as the catalytic Nucleophile; for glutamine hydrolysis. Residues 382–385 (LGMQ), E405, and R462 each bind L-glutamine. Residues H507 and E509 contribute to the active site.

Belongs to the CTP synthase family. Homotetramer.

The enzyme catalyses UTP + L-glutamine + ATP + H2O = CTP + L-glutamate + ADP + phosphate + 2 H(+). It catalyses the reaction L-glutamine + H2O = L-glutamate + NH4(+). It carries out the reaction UTP + NH4(+) + ATP = CTP + ADP + phosphate + 2 H(+). The protein operates within pyrimidine metabolism; CTP biosynthesis via de novo pathway; CTP from UDP: step 2/2. Allosterically activated by GTP, when glutamine is the substrate; GTP has no effect on the reaction when ammonia is the substrate. The allosteric effector GTP functions by stabilizing the protein conformation that binds the tetrahedral intermediate(s) formed during glutamine hydrolysis. Inhibited by the product CTP, via allosteric rather than competitive inhibition. In terms of biological role, catalyzes the ATP-dependent amination of UTP to CTP with either L-glutamine or ammonia as the source of nitrogen. Regulates intracellular CTP levels through interactions with the four ribonucleotide triphosphates. The sequence is that of CTP synthase from Dehalococcoides mccartyi (strain ATCC BAA-2266 / KCTC 15142 / 195) (Dehalococcoides ethenogenes (strain 195)).